The sequence spans 684 residues: Chaperone protein HtpG (684 aa).

The segment at 1–329 is a; substrate-binding; sequence MSKKGTIGVT…SPDIPLNVSR (329 aa). The tract at residues 330-548 is b; sequence SYLQSDANVK…FMRRMRDMAQ (219 aa). The interval 549 to 684 is c; the sequence is LQPGMSFYGE…EFIRRSQRLL (136 aa).

It belongs to the heat shock protein 90 family. In terms of assembly, homodimer.

It localises to the cytoplasm. Functionally, molecular chaperone. Has ATPase activity. This Porphyromonas gingivalis (strain ATCC 33277 / DSM 20709 / CIP 103683 / JCM 12257 / NCTC 11834 / 2561) protein is Chaperone protein HtpG.